The sequence spans 23 residues: Acidic phospholipase A2 CTs-A2 (23 aa).

Requires Ca(2+) as cofactor. Contains 7 disulfide bonds. Expressed by the venom gland.

Its subcellular location is the secreted. The enzyme catalyses a 1,2-diacyl-sn-glycero-3-phosphocholine + H2O = a 1-acyl-sn-glycero-3-phosphocholine + a fatty acid + H(+). In terms of biological role, snake venom phospholipase A2 (PLA2) that shows a moderate inhibition of ADP-induced human platelet aggregation when tested on platelet rich plasma. Exhibits moderate hydrolytic activities and prefers the anionic micelles (dPPC with deoxycholate) to the zwitterionic micelles (dPPC with Triton X-100). PLA2 catalyzes the calcium-dependent hydrolysis of the 2-acyl groups in 3-sn-phosphoglycerides. This Trimeresurus stejnegeri (Chinese green tree viper) protein is Acidic phospholipase A2 CTs-A2.